Consider the following 123-residue polypeptide: Probable U6 snRNA-associated Sm-like protein LSm4 (123 aa).

In terms of domain architecture, Sm spans 3-76 (LPLSLLKTAQ…IKYLRIPETV (74 aa)). The segment covering 85 to 97 (NEVRRQQQREQSR) has biased composition (basic and acidic residues). The tract at residues 85-123 (NEVRRQQQREQSRGRGGGRGGRGGHRGGGGNRGGRGGAR) is disordered. Residues 98-123 (GRGGGRGGRGGHRGGGGNRGGRGGAR) are compositionally biased toward gly residues.

It belongs to the snRNP Sm proteins family. Component of the precatalytic spliceosome (spliceosome B complex). Component of the U4/U6-U5 tri-snRNP complex, a building block of the precatalytic spliceosome (spliceosome B complex). LSM2, LSM3, LSM4, LSM5, LSM6, LSM7 and LSM8 form a heptameric, ring-shaped subcomplex (the LSM2-8 complex) that is part of the U4/U6-U5 tri-snRNP complex and the precatalytic spliceosome.

The protein localises to the nucleus. Functionally, plays a role in pre-mRNA splicing as component of the U4/U6-U5 tri-snRNP complex that is involved in spliceosome assembly, and as component of the precatalytic spliceosome (spliceosome B complex). The heptameric LSM2-8 complex binds specifically to the 3'-terminal U-tract of U6 snRNA. The sequence is that of Probable U6 snRNA-associated Sm-like protein LSm4 (lsm-4) from Caenorhabditis elegans.